Here is a 704-residue protein sequence, read N- to C-terminus: Elongation factor G (704 aa).

The 283-residue stretch at 8–290 (ARYRNIGISA…AVIDYLPSPV (283 aa)) folds into the tr-type G domain. GTP is bound by residues 17–24 (AHIDAGKT), 88–92 (DTPGH), and 142–145 (NKMD).

The protein belongs to the TRAFAC class translation factor GTPase superfamily. Classic translation factor GTPase family. EF-G/EF-2 subfamily.

It is found in the cytoplasm. Functionally, catalyzes the GTP-dependent ribosomal translocation step during translation elongation. During this step, the ribosome changes from the pre-translocational (PRE) to the post-translocational (POST) state as the newly formed A-site-bound peptidyl-tRNA and P-site-bound deacylated tRNA move to the P and E sites, respectively. Catalyzes the coordinated movement of the two tRNA molecules, the mRNA and conformational changes in the ribosome. The polypeptide is Elongation factor G (Salmonella arizonae (strain ATCC BAA-731 / CDC346-86 / RSK2980)).